A 473-amino-acid chain; its full sequence is tRNA-2-methylthio-N(6)-dimethylallyladenosine synthase (473 aa).

The MTTase N-terminal domain occupies 5 to 125 (RKLHIKSYGC…LPQLLARAKA (121 aa)). Residues Cys-14, Cys-50, Cys-88, Cys-166, Cys-170, and Cys-173 each contribute to the [4Fe-4S] cluster site. In terms of domain architecture, Radical SAM core spans 152 to 384 (RARGISAFVT…QNLIDSQQSA (233 aa)). Positions 387-449 (RAAVGTTVDV…RYSLLGSLAS (63 aa)) constitute a TRAM domain. Residues 453-462 (SRASADDAPP) show a composition bias toward low complexity. A disordered region spans residues 453-473 (SRASADDAPPVGASSPAIMGV).

Belongs to the methylthiotransferase family. MiaB subfamily. Monomer. [4Fe-4S] cluster serves as cofactor.

It localises to the cytoplasm. It catalyses the reaction N(6)-dimethylallyladenosine(37) in tRNA + (sulfur carrier)-SH + AH2 + 2 S-adenosyl-L-methionine = 2-methylsulfanyl-N(6)-dimethylallyladenosine(37) in tRNA + (sulfur carrier)-H + 5'-deoxyadenosine + L-methionine + A + S-adenosyl-L-homocysteine + 2 H(+). Functionally, catalyzes the methylthiolation of N6-(dimethylallyl)adenosine (i(6)A), leading to the formation of 2-methylthio-N6-(dimethylallyl)adenosine (ms(2)i(6)A) at position 37 in tRNAs that read codons beginning with uridine. This chain is tRNA-2-methylthio-N(6)-dimethylallyladenosine synthase, found in Nitrobacter hamburgensis (strain DSM 10229 / NCIMB 13809 / X14).